A 125-amino-acid chain; its full sequence is UPF0389 protein CG9231 (125 aa).

Residues 69–88 traverse the membrane as a helical segment; it reads IRLANIMIALTAVGCAIMVY. The N-linked (GlcNAc...) asparagine glycan is linked to Asn112.

It belongs to the UPF0389 family.

It is found in the membrane. This Drosophila melanogaster (Fruit fly) protein is UPF0389 protein CG9231.